A 106-amino-acid chain; its full sequence is MQNKVHVRKQDTVMVISGKDKGKIGEVLRVLPKSGKVVVKDVNVVTKHQKPSRENMQGGIIHVEAPIYSSKVMLYCTKCKSVTRINHKILDDGTKVRVCKKCGETF.

This sequence belongs to the universal ribosomal protein uL24 family. As to quaternary structure, part of the 50S ribosomal subunit.

Functionally, one of two assembly initiator proteins, it binds directly to the 5'-end of the 23S rRNA, where it nucleates assembly of the 50S subunit. Its function is as follows. One of the proteins that surrounds the polypeptide exit tunnel on the outside of the subunit. In Clostridium tetani (strain Massachusetts / E88), this protein is Large ribosomal subunit protein uL24.